Consider the following 526-residue polypeptide: Dolichyl pyrophosphate Glc1Man9GlcNAc2 alpha-1,3-glucosyltransferase (526 aa).

11 consecutive transmembrane segments (helical) span residues 9–29 (AGGH…CLLI), 108–128 (FSVI…CKCI), 143–163 (FILS…HIHF), 188–208 (GALL…VAPA), 238–258 (VTSL…PFLA), 334–354 (PLAT…CLWF), 361–380 (GFLR…GWHV), 400–422 (AGDA…PLLF), 427–449 (LPIK…KTLF), 461–481 (TVYL…LPFT), and 487–507 (YPFI…TYAW).

Belongs to the ALG6/ALG8 glucosyltransferase family.

It localises to the endoplasmic reticulum membrane. It catalyses the reaction an alpha-D-Glc-(1-&gt;3)-alpha-D-Man-(1-&gt;2)-alpha-D-Man-(1-&gt;2)-alpha-D-Man-(1-&gt;3)-[alpha-D-Man-(1-&gt;2)-alpha-D-Man-(1-&gt;3)-[alpha-D-Man-(1-&gt;2)-alpha-D-Man-(1-&gt;6)]-alpha-D-Man-(1-&gt;6)]-beta-D-Man-(1-&gt;4)-beta-D-GlcNAc-(1-&gt;4)-alpha-D-GlcNAc-diphospho-di-trans,poly-cis-dolichol + a di-trans,poly-cis-dolichyl beta-D-glucosyl phosphate = an alpha-D-Glc-(1-&gt;3)-alpha-D-Glc-(1-&gt;3)-alpha-D-Man-(1-&gt;2)-alpha-D-Man-(1-&gt;2)-alpha-D-Man-(1-&gt;3)-[alpha-D-Man-(1-&gt;2)-alpha-D-Man-(1-&gt;3)-[alpha-D-Man-(1-&gt;2)-alpha-D-Man-(1-&gt;6)]-alpha-D-Man-(1-&gt;6)]-beta-D-Man-(1-&gt;4)-beta-D-GlcNAc-(1-&gt;4)-alpha-D-GlcNAc-diphospho-di-trans,poly-cis-dolichol + a di-trans,poly-cis-dolichyl phosphate + H(+). It functions in the pathway protein modification; protein glycosylation. Functionally, dolichyl pyrophosphate Glc1Man9GlcNAc2 alpha-1,3-glucosyltransferase that operates in the biosynthetic pathway of dolichol-linked oligosaccharides, the glycan precursors employed in protein asparagine (N)-glycosylation. The assembly of dolichol-linked oligosaccharides begins on the cytosolic side of the endoplasmic reticulum membrane and finishes in its lumen. The sequential addition of sugars to dolichol pyrophosphate produces dolichol-linked oligosaccharides containing fourteen sugars, including two GlcNAcs, nine mannoses and three glucoses. Once assembled, the oligosaccharide is transferred from the lipid to nascent proteins by oligosaccharyltransferases. In the lumen of the endoplasmic reticulum, adds the second glucose residue from dolichyl phosphate glucose (Dol-P-Glc) onto the lipid-linked oligosaccharide intermediate Glc(1)Man(9)GlcNAc(2)-PP-Dol to produce Glc(2)Man(9)GlcNAc(2)-PP-Dol. Glc(2)Man(9)GlcNAc(2)-PP-Dol is a substrate for ALG10, the following enzyme in the biosynthetic pathway. Required for PKD1/Polycystin-1 maturation and localization to the plasma membrane of the primary cilia. The protein is Dolichyl pyrophosphate Glc1Man9GlcNAc2 alpha-1,3-glucosyltransferase of Mus musculus (Mouse).